Here is a 129-residue protein sequence, read N- to C-terminus: Protein FYV12 (129 aa).

Asn91 is a glycosylation site (N-linked (GlcNAc...) asparagine). The chain crosses the membrane as a helical span at residues 109–128; that stretch reads LMTTFLLYVLYVCIYISAFI.

It localises to the membrane. Its function is as follows. Involved in K1 killer toxin resistance. This chain is Protein FYV12 (FYV12), found in Saccharomyces cerevisiae (strain ATCC 204508 / S288c) (Baker's yeast).